A 78-amino-acid chain; its full sequence is Large ribosomal subunit protein bL28 (78 aa).

It belongs to the bacterial ribosomal protein bL28 family.

The chain is Large ribosomal subunit protein bL28 from Clavibacter michiganensis subsp. michiganensis (strain NCPPB 382).